Reading from the N-terminus, the 353-residue chain is MNSLLLHCRPGFEGEVCAEIGEHAGRLNVAGYARAKPNSAHAEFVCSEPGGAERLMRELRFAGLVFPRQWARGAFVELPESERIGVLLEHLAAYPVCGSLWLEVLDSNEGKELSTFCRKFEVPLRKALGKTGRLLDDPRRPRLLLTFRSGREVFLGLAEPDNSAAWPMGIPRLKFPREAPSRSTLKLEEAWHQFIPREAWDLRLAPGMSAVDLGAAPGGWTWQLVNRHMKVTAVDNGPMAQSLMDSGLVEHVRADGFVFRPRRPVDWMVCDIVEKPARTAALIETWLGEGLCREAVVNLKLPMKQRHAEVRRLLERIRDGLSARGAKVSVACRQLYHDREEVTCHLCRLPAPA.

Residues Ser183, 216–219 (APGG), Asp235, Asp255, and Asp271 contribute to the S-adenosyl-L-methionine site. Catalysis depends on Lys300, which acts as the Proton acceptor.

Belongs to the class I-like SAM-binding methyltransferase superfamily. RNA methyltransferase RlmE family. RlmM subfamily. In terms of assembly, monomer.

The protein localises to the cytoplasm. The catalysed reaction is cytidine(2498) in 23S rRNA + S-adenosyl-L-methionine = 2'-O-methylcytidine(2498) in 23S rRNA + S-adenosyl-L-homocysteine + H(+). In terms of biological role, catalyzes the 2'-O-methylation at nucleotide C2498 in 23S rRNA. The protein is Ribosomal RNA large subunit methyltransferase M of Azotobacter vinelandii (strain DJ / ATCC BAA-1303).